A 204-amino-acid polypeptide reads, in one-letter code: Inositol diphosphatase DSP2 (204 aa).

The segment at 1–27 is disordered; that stretch reads MQLEISPRQRSQQQKEEEGEHQQRAGE. Residues 13-27 show a composition bias toward basic and acidic residues; that stretch reads QQKEEEGEHQQRAGE. The Tyrosine-protein phosphatase domain maps to 51-203; the sequence is NFAEVNDGIF…SSLMHLTASQ (153 aa). The tract at residues 107 to 119 is WPD loop important for active site topology; it reads FGIDGSKELLVNI. 1D-myo-inositol hexakisphosphate contacts are provided by Asn118, Ile119, and Lys123. The active-site Phosphocysteine intermediate is Cys143.

This sequence belongs to the protein-tyrosine phosphatase family. Atypical dual-specificity phosphatase Siw14-like subfamily. In terms of tissue distribution, expressed in roots and young panicles.

Its subcellular location is the cytoplasm. The protein resides in the nucleus. The catalysed reaction is 5-diphospho-1D-myo-inositol 1,2,3,4,6-pentakisphosphate + H2O = 1D-myo-inositol hexakisphosphate + phosphate + H(+). The enzyme catalyses 1,5-bis(diphospho)-1D-myo-inositol 2,3,4,6-tetrakisphosphate + H2O = 1-diphospho-1D-myo-inositol 2,3,4,5,6-pentakisphosphate + phosphate + 2 H(+). It catalyses the reaction 3,5-bis(diphospho)-1D-myo-inositol 1,2,4,6-tetrakisphosphate + H2O = 3-diphospho-1D-myo-inositol 1,2,4,5,6-pentakisphosphate + phosphate + 2 H(+). It carries out the reaction 6-diphospho-1D-myo-inositol pentakisphosphate + H2O = 1D-myo-inositol hexakisphosphate + phosphate + H(+). Functionally, cleaves the beta-phosphate at the 5-position of soluble inositol pyrophosphates. Has highest activity on 5-diphosphoinositol 1,2,3,4,6-pentakisphosphate (5-InsP(7)). Acts as a negative regulator of defense responses against the fungal pathogen Magnaporthe oryzae. The sequence is that of Inositol diphosphatase DSP2 from Oryza sativa subsp. japonica (Rice).